Reading from the N-terminus, the 1235-residue chain is Structural maintenance of chromosomes protein 1B (1235 aa).

32-39 (GPNGSGKS) serves as a coordination point for ATP. Residues 156–490 (EEISTSGELI…RSELQNAGID (335 aa)) adopt a coiled-coil conformation. The SMC hinge domain maps to 514–629 (SVFGRLFDLC…ETMEEARHIA (116 aa)). N6-acetyllysine occurs at positions 648 and 713. 3 coiled-coil regions span residues 666–934 (WDEK…LDCK), 970–994 (EKEE…SDQE), and 1022–1049 (RALE…KEAR). K1033 carries the N6-acetyllysine modification.

This sequence belongs to the SMC family. SMC1 subfamily. As to quaternary structure, forms a heterodimer with SMC3. Component of a meiosis-specific cohesin complex, probably composed of the SMC1B and SMC3 heterodimer attached via their SMC hinge domain, RAD21 (or its meiosis-specific related protein REC8), which link them, and STAG3, which interacts with RAD21 or REC8. The cohesin complex interacts with the cohesin loading complex subunits NIPBL/Scc2 (via HEAT repeats) and MAU2/Scc4. NIPBL directly contacts all members of the complex, RAD21, SMC1A/B, SMC3 and STAG1.

It localises to the nucleus. It is found in the chromosome. Its subcellular location is the centromere. In terms of biological role, meiosis-specific component of cohesin complex. Required for the maintenance of meiotic cohesion, but not, or only to a minor extent, for its establishment. Contributes to axial element (AE) formation and the organization of chromatin loops along the AE. Plays a key role in synapsis, recombination and chromosome movements. The cohesin complex is required for the cohesion of sister chromatids after DNA replication. The cohesin complex apparently forms a large proteinaceous ring within which sister chromatids can be trapped. At anaphase, the complex is cleaved and dissociates from chromatin, allowing sister chromatids to segregate. The meiosis-specific cohesin complex probably replaces mitosis specific cohesin complex when it dissociates from chromatin during prophase I. The chain is Structural maintenance of chromosomes protein 1B (SMC1B) from Homo sapiens (Human).